The sequence spans 241 residues: MRFIMPIKYKRMLLKLSGEALMGKDSYGINTGVLEFVAGEIKELVAMGVELGVVVGAGNIFRGMAGASKGMDRATADNMGMLATVMNSLAMQDALERSGVITRAMSAIPMQSICESYIRRRATRHLEKGRVVIFAAGTGNPYFTTDSAGVLRALEIDADIVVKATKVDGVYDKDPMIHDDAVKFEHLTYDDVLRKGLKVMDAAGIALAKDDDKPIMVLNMSVAGNMKKAALGERVGTLITA.

Residues 15-18 (KLSG), Gly58, and Arg62 each bind ATP. Residues Asp77 and 138–145 (TGNPYFTT) contribute to the UMP site. ATP is bound by residues Thr165, Tyr171, and Asp174.

It belongs to the UMP kinase family. In terms of assembly, homohexamer.

The protein localises to the cytoplasm. It carries out the reaction UMP + ATP = UDP + ADP. It participates in pyrimidine metabolism; CTP biosynthesis via de novo pathway; UDP from UMP (UMPK route): step 1/1. With respect to regulation, inhibited by UTP. Catalyzes the reversible phosphorylation of UMP to UDP. The sequence is that of Uridylate kinase from Desulfotalea psychrophila (strain LSv54 / DSM 12343).